A 179-amino-acid polypeptide reads, in one-letter code: ATP synthase subunit delta (179 aa).

This sequence belongs to the ATPase delta chain family. F-type ATPases have 2 components, F(1) - the catalytic core - and F(0) - the membrane proton channel. F(1) has five subunits: alpha(3), beta(3), gamma(1), delta(1), epsilon(1). F(0) has three main subunits: a(1), b(2) and c(10-14). The alpha and beta chains form an alternating ring which encloses part of the gamma chain. F(1) is attached to F(0) by a central stalk formed by the gamma and epsilon chains, while a peripheral stalk is formed by the delta and b chains.

It is found in the cell membrane. In terms of biological role, f(1)F(0) ATP synthase produces ATP from ADP in the presence of a proton or sodium gradient. F-type ATPases consist of two structural domains, F(1) containing the extramembraneous catalytic core and F(0) containing the membrane proton channel, linked together by a central stalk and a peripheral stalk. During catalysis, ATP synthesis in the catalytic domain of F(1) is coupled via a rotary mechanism of the central stalk subunits to proton translocation. Functionally, this protein is part of the stalk that links CF(0) to CF(1). It either transmits conformational changes from CF(0) to CF(1) or is implicated in proton conduction. In Staphylococcus carnosus (strain TM300), this protein is ATP synthase subunit delta.